Reading from the N-terminus, the 178-residue chain is Caveolin-1 (178 aa).

At Ser2 the chain carries N-acetylserine. Residue Ser2 is modified to Phosphoserine. Residues 2-94 are required for homooligomerization; it reads SGGKYVDSEG…WKASFTTFTV (93 aa). Residues 2–104 are Cytoplasmic-facing; that stretch reads SGGKYVDSEG…TKYWFYRLLS (103 aa). Lys5 is modified (N6-acetyllysine; alternate). Residue Lys5 forms a Glycyl lysine isopeptide (Lys-Gly) (interchain with G-Cter in ubiquitin); alternate linkage. A Phosphotyrosine modification is found at Tyr6. Position 9 is a phosphoserine (Ser9). Position 14 is a phosphotyrosine; by ABL1 (Tyr14). Phosphotyrosine is present on Tyr25. Glycyl lysine isopeptide (Lys-Gly) (interchain with G-Cter in ubiquitin) cross-links involve residues Lys26 and Lys30. Ser37 is modified (phosphoserine). Residues Lys39, Lys47, and Lys57 each participate in a glycyl lysine isopeptide (Lys-Gly) (interchain with G-Cter in ubiquitin) cross-link. An interaction with CAVIN3 region spans residues 82 to 94; the sequence is DGIWKASFTTFTV. The helical intramembrane region spans 105–125; that stretch reads ALFGIPMALVWGIYFAILSFL. Residues 126–178 lie on the Cytoplasmic side of the membrane; sequence HIWAVVPCIKSFLIEIQCISRVYSIYVHTVCDPLFEAVGKIFSNVRINLQKEI. The tract at residues 131–142 is interacts with SPRY1, SPRY2, SPRY3 and SPRY4; the sequence is VPCIKSFLIEIQ. Residues Cys133, Cys143, and Cys156 are each lipidated (S-palmitoyl cysteine). Residues 149–160 form an interacts with SPRY1, SPRY2, and SPRY4 region; sequence SIYVHTVCDPLF. The segment at 167–178 is interacts with SPRY1, SPRY2, SPRY3 and SPRY4; that stretch reads FSNVRINLQKEI.

It belongs to the caveolin family. As to quaternary structure, homooligomer. Interacts with GLIPR2. Interacts with NOSTRIN. Interacts with SNAP25 and STX1A. Interacts (via the N-terminus) with DPP4; the interaction is direct. Interacts with CTNNB1, CDH1 and JUP. Interacts with PACSIN2; this interaction induces membrane tubulation. Interacts with SLC7A9. Interacts with BMX and BTK. Interacts with TGFBR1. Interacts with CAVIN3 (via leucine-zipper domain) in a cholesterol-sensitive manner. Interacts with CAVIN1. Interacts with EHD2 in a cholesterol-dependent manner. Forms a ternary complex with UBXN6 and VCP; mediates CAV1 targeting to lysosomes for degradation. Interacts with ABCG1; this interaction regulates ABCG1-mediated cholesterol efflux. Interacts with NEU3; this interaction enhances NEU3 sialidase activity within caveola. Interacts (via C-terminus) with SPRY1, SPRY2 (via C-terminus), SPRY3, and SPRY4. Interacts with IGFBP5; this interaction allows trafficking of IGFBP5 from the plasma membrane to the nucleus. Phosphorylated at Tyr-14 by ABL1 in response to oxidative stress. In terms of processing, ubiquitinated. Undergo monoubiquitination and multi- and/or polyubiquitination. Monoubiquitination of N-terminal lysines promotes integration in a ternary complex with UBXN6 and VCP which promotes oligomeric CAV1 targeting to lysosomes for degradation. Ubiquitinated by ZNRF1; leading to degradation and modulation of the TLR4-mediated immune response.

It localises to the golgi apparatus membrane. It is found in the cell membrane. Its subcellular location is the membrane. The protein resides in the caveola. The protein localises to the membrane raft. Its function is as follows. May act as a scaffolding protein within caveolar membranes. Forms a stable heterooligomeric complex with CAV2 that targets to lipid rafts and drives caveolae formation. Mediates the recruitment of CAVIN proteins (CAVIN1/2/3/4) to the caveolae. Interacts directly with G-protein alpha subunits and can functionally regulate their activity. Involved in the costimulatory signal essential for T-cell receptor (TCR)-mediated T-cell activation. Its binding to DPP4 induces T-cell proliferation and NF-kappa-B activation in a T-cell receptor/CD3-dependent manner. Recruits CTNNB1 to caveolar membranes and may regulate CTNNB1-mediated signaling through the Wnt pathway. Negatively regulates TGFB1-mediated activation of SMAD2/3 by mediating the internalization of TGFBR1 from membrane rafts leading to its subsequent degradation. Binds 20(S)-hydroxycholesterol (20(S)-OHC). In Papio anubis (Olive baboon), this protein is Caveolin-1 (CAV1).